The primary structure comprises 214 residues: Large ribosomal subunit protein uL16 (214 aa).

Position 32 is a citrulline (arginine 32). Residue lysine 175 forms a Glycyl lysine isopeptide (Lys-Gly) (interchain with G-Cter in SUMO2) linkage. A Glycyl lysine isopeptide (Lys-Gly) (interchain with G-Cter in ubiquitin) cross-link involves residue lysine 188.

Belongs to the universal ribosomal protein uL16 family. As to quaternary structure, component of the large ribosomal subunit. Mature ribosomes consist of a small (40S) and a large (60S) subunit. The 40S subunit contains about 33 different proteins and 1 molecule of RNA (18S). The 60S subunit contains about 49 different proteins and 3 molecules of RNA (28S, 5.8S and 5S). Citrullinated by PADI4. In terms of processing, ufmylated by UFL1.

The protein resides in the cytoplasm. Its function is as follows. Component of the large ribosomal subunit. Plays a role in the formation of actively translating ribosomes. May play a role in the embryonic brain development. This is Large ribosomal subunit protein uL16 from Bos taurus (Bovine).